Reading from the N-terminus, the 162-residue chain is Ribosome maturation factor RimM (162 aa).

One can recognise a PRC barrel domain in the interval 90-161 (EDCYYEADIV…KIIIKPLEVW (72 aa)).

It belongs to the RimM family. Binds ribosomal protein uS19.

The protein localises to the cytoplasm. Functionally, an accessory protein needed during the final step in the assembly of 30S ribosomal subunit, possibly for assembly of the head region. Essential for efficient processing of 16S rRNA. May be needed both before and after RbfA during the maturation of 16S rRNA. It has affinity for free ribosomal 30S subunits but not for 70S ribosomes. The polypeptide is Ribosome maturation factor RimM (Clostridium novyi (strain NT)).